The following is a 363-amino-acid chain: Pyrimidine monooxygenase RutA (363 aa).

FMN contacts are provided by residues 49-50, Asn115, Glu124, 140-141, and Ser190; these read IK and RY.

This sequence belongs to the NtaA/SnaA/DszA monooxygenase family. RutA subfamily.

The catalysed reaction is uracil + FMNH2 + NADH + O2 = (Z)-3-ureidoacrylate + FMN + NAD(+) + H2O + H(+). It carries out the reaction thymine + FMNH2 + NADH + O2 = (Z)-2-methylureidoacrylate + FMN + NAD(+) + H2O + H(+). Catalyzes the pyrimidine ring opening between N-3 and C-4 by an unusual flavin hydroperoxide-catalyzed mechanism, adding oxygen atoms in the process to yield ureidoacrylate peracid, that immediately reacts with FMN forming ureidoacrylate and FMN-N(5)-oxide. The FMN-N(5)-oxide reacts spontaneously with NADH to produce FMN. Requires the flavin reductase RutF to regenerate FMN in vivo. This Escherichia coli O6:K15:H31 (strain 536 / UPEC) protein is Pyrimidine monooxygenase RutA.